We begin with the raw amino-acid sequence, 87 residues long: Keratin-associated protein 19-3 (87 aa).

Positions 9–82 (GGLGYGYGSF…RRPSCCGGYG (74 aa)) are 23 X 2 AA repeats of G-[YCGS].

This sequence belongs to the KRTAP type 19 family. In terms of assembly, interacts with hair keratins. In terms of tissue distribution, strong expression in narrowly defined pattern restricted to the lower and middle cortical regions of the hair shaft in both developing and cycling hair. During hair follicle regression (catagen), expression levels decrease until expression is no longer detectable in follicles at resting stage (telogen).

In the hair cortex, hair keratin intermediate filaments are embedded in an interfilamentous matrix, consisting of hair keratin-associated proteins (KRTAP), which are essential for the formation of a rigid and resistant hair shaft through their extensive disulfide bond cross-linking with abundant cysteine residues of hair keratins. The matrix proteins include the high-sulfur and high-glycine-tyrosine keratins. The protein is Keratin-associated protein 19-3 (Krtap19-3) of Mus musculus (Mouse).